Consider the following 341-residue polypeptide: tRNA N6-adenosine threonylcarbamoyltransferase (341 aa).

Fe cation-binding residues include His114 and His118. Substrate contacts are provided by residues 136–140, Asp170, Gly183, Asp187, and Asn275; that span reads LVSGG. Position 303 (Asp303) interacts with Fe cation.

This sequence belongs to the KAE1 / TsaD family. Fe(2+) serves as cofactor.

It is found in the cytoplasm. It carries out the reaction L-threonylcarbamoyladenylate + adenosine(37) in tRNA = N(6)-L-threonylcarbamoyladenosine(37) in tRNA + AMP + H(+). In terms of biological role, required for the formation of a threonylcarbamoyl group on adenosine at position 37 (t(6)A37) in tRNAs that read codons beginning with adenine. Is involved in the transfer of the threonylcarbamoyl moiety of threonylcarbamoyl-AMP (TC-AMP) to the N6 group of A37, together with TsaE and TsaB. TsaD likely plays a direct catalytic role in this reaction. The sequence is that of tRNA N6-adenosine threonylcarbamoyltransferase from Mycobacterium avium (strain 104).